The sequence spans 276 residues: NAD kinase (276 aa).

Aspartate 61 (proton acceptor) is an active-site residue. Residues 61–62, arginine 66, 135–136, arginine 146, histidine 163, aspartate 165, and alanine 200 each bind NAD(+); these read DG and NE.

This sequence belongs to the NAD kinase family. Requires a divalent metal cation as cofactor.

The protein localises to the cytoplasm. The enzyme catalyses NAD(+) + ATP = ADP + NADP(+) + H(+). Involved in the regulation of the intracellular balance of NAD and NADP, and is a key enzyme in the biosynthesis of NADP. Catalyzes specifically the phosphorylation on 2'-hydroxyl of the adenosine moiety of NAD to yield NADP. The sequence is that of NAD kinase from Chloroflexus aurantiacus (strain ATCC 29366 / DSM 635 / J-10-fl).